Reading from the N-terminus, the 406-residue chain is RING finger protein PSH1 (406 aa).

The RING-type zinc finger occupies 30-72 (CSICHDYMFVPMMTPCGHNYCYGCLNTWFASNTQKELACPQCR). Phosphoserine occurs at positions 143 and 191. The segment at 209–406 (RFASTNPFAN…RVVLGDSDDE (198 aa)) is disordered. Composition is skewed to acidic residues over residues 223 to 232 (SSEDDDSSEE), 256 to 274 (AVDDEDDEEEDEEEEEEMD), and 281 to 291 (IEDDEDDEDED). Thr310 is modified (phosphothreonine). A Phosphoserine modification is found at Ser403.

Interacts with POB3 and SPT16.

The protein localises to the nucleus. The chain is RING finger protein PSH1 (PSH1) from Saccharomyces cerevisiae (strain ATCC 204508 / S288c) (Baker's yeast).